The sequence spans 399 residues: Dof zinc finger protein DOF5.1 (399 aa).

Residues 95–149 form a Dof-type zinc finger; that stretch reads LKCPRCDSTNTKFCYFNNYSLTQPRHFCKACRRYWTRGGALRSVPVGGGCRRNKR. Zn(2+)-binding residues include cysteine 97, cysteine 100, cysteine 122, and cysteine 125. The interval 139–176 is disordered; sequence PVGGGCRRNKRTKNSSGGGGGSTSSGNSKSQDSATSND.

As to expression, expressed ubiquitously, especially in the vascular tissues, except in seeds, petals and anthers. Specific to the vascular tissues in young leaves, cotyledons and flower buds. The PEAR proteins (e.g. DOF2.4, DOF5.1, DOF3.2, DOF1.1, DOF5.6 and DOF5.3) form a short-range concentration gradient that peaks at protophloem sieve elements (PSE).

Its subcellular location is the nucleus. Functionally, transcription factor that binds specifically to a 5'-AA[AG]G-3' consensus core sequence. Binds to 5'-TAAAGT-3' motif in REV promoter to triggers its transcription, thus regulating adaxial-abaxial polarity and influencing leaf axial patterning in an auxin transport- and response-dependent manner (e.g. IAA6 and IAA19 genes expression). Probably involved in early processes for vascular development. The PEAR proteins (e.g. DOF2.4, DOF5.1, DOF3.2, DOF1.1, DOF5.6 and DOF5.3) activate gene expression that promotes radial growth of protophloem sieve elements. This chain is Dof zinc finger protein DOF5.1, found in Arabidopsis thaliana (Mouse-ear cress).